A 64-amino-acid chain; its full sequence is Weak toxin CM-9a (64 aa).

5 disulfides stabilise this stretch: Cys3-Cys24, Cys6-Cys11, Cys17-Cys41, Cys45-Cys56, and Cys57-Cys62.

Belongs to the three-finger toxin family. Ancestral subfamily. Orphan group II sub-subfamily. As to expression, expressed by the venom gland.

The protein localises to the secreted. In terms of biological role, binds with low affinity to muscular (alpha-1-beta-1-delta-epsilon/CHRNA1-CHRNB1-CHRND-CHRNE) and very low affinity to neuronal (alpha-7/CHRNA7) nicotinic acetylcholine receptor (nAChR). This is Weak toxin CM-9a from Naja kaouthia (Monocled cobra).